The following is an 848-amino-acid chain: Leucine--tRNA ligase (848 aa).

Basic and acidic residues predominate over residues 1–16; sequence MCPEQPHDTRAERDEM. Positions 1–30 are disordered; it reads MCPEQPHDTRAERDEMSEQTQQAAQPAETA. The segment covering 18–30 has biased composition (low complexity); it reads EQTQQAAQPAETA. The short motif at 69 to 79 is the 'HIGH' region element; sequence PYPSGDLHMGH. A 'KMSKS' region motif is present at residues 614–618; it reads KMSKS. K617 serves as a coordination point for ATP.

The protein belongs to the class-I aminoacyl-tRNA synthetase family.

Its subcellular location is the cytoplasm. The catalysed reaction is tRNA(Leu) + L-leucine + ATP = L-leucyl-tRNA(Leu) + AMP + diphosphate. This is Leucine--tRNA ligase from Nocardioides sp. (strain ATCC BAA-499 / JS614).